The sequence spans 195 residues: 3-isopropylmalate dehydratase small subunit (195 aa).

The protein belongs to the LeuD family. LeuD type 1 subfamily. In terms of assembly, heterodimer of LeuC and LeuD.

It carries out the reaction (2R,3S)-3-isopropylmalate = (2S)-2-isopropylmalate. It participates in amino-acid biosynthesis; L-leucine biosynthesis; L-leucine from 3-methyl-2-oxobutanoate: step 2/4. Catalyzes the isomerization between 2-isopropylmalate and 3-isopropylmalate, via the formation of 2-isopropylmaleate. This Parafrankia sp. (strain EAN1pec) protein is 3-isopropylmalate dehydratase small subunit.